Consider the following 456-residue polypeptide: Methylenetetrahydrofolate--tRNA-(uracil-5-)-methyltransferase TrmFO (456 aa).

FAD is bound at residue 11–16 (GGGLAG).

Belongs to the MnmG family. TrmFO subfamily. The cofactor is FAD.

Its subcellular location is the cytoplasm. The enzyme catalyses uridine(54) in tRNA + (6R)-5,10-methylene-5,6,7,8-tetrahydrofolate + NADH + H(+) = 5-methyluridine(54) in tRNA + (6S)-5,6,7,8-tetrahydrofolate + NAD(+). The catalysed reaction is uridine(54) in tRNA + (6R)-5,10-methylene-5,6,7,8-tetrahydrofolate + NADPH + H(+) = 5-methyluridine(54) in tRNA + (6S)-5,6,7,8-tetrahydrofolate + NADP(+). Its function is as follows. Catalyzes the folate-dependent formation of 5-methyl-uridine at position 54 (M-5-U54) in all tRNAs. The sequence is that of Methylenetetrahydrofolate--tRNA-(uracil-5-)-methyltransferase TrmFO from Synechocystis sp. (strain ATCC 27184 / PCC 6803 / Kazusa).